Reading from the N-terminus, the 81-residue chain is MEHRVIYVLVLVCALTLSSLAQGQQETCTVAPHHRDNCGSPGITPSQCKDKGCCFDNTVRGVPWCYYPVAVDNPPEEECPF.

Residues 1–23 (MEHRVIYVLVLVCALTLSSLAQG) form the signal peptide. Residues 26 to 69 (ETCTVAPHHRDNCGSPGITPSQCKDKGCCFDNTVRGVPWCYYPV) enclose the P-type domain. 3 disulfides stabilise this stretch: C28-C54, C38-C53, and C48-C65.

The protein resides in the secreted. Stabilizer of the mucous gel overlying the gastrointestinal mucosa that provides a physical barrier against various noxious agents. The sequence is that of Trefoil factor 1 (TFF1) from Canis lupus familiaris (Dog).